Consider the following 102-residue polypeptide: Late embryogenesis abundant protein D-19 (102 aa).

The tract at residues 1–102 is disordered; that stretch reads MASEQYQAMR…IDESKFRTKN (102 aa). Residues 48–58 are compositionally biased toward basic and acidic residues; sequence EGRHKGGETRK.

The protein belongs to the small hydrophilic plant seed protein family.

Its function is as follows. LEA proteins are late embryonic proteins abundant in higher plant seed embryos. There are two subsets of LEA proteins (5a and 5b), the first ones are expressed when the cotyledon weight reach 80 mg and the second set are expressed above 100 mg. The function of those proteins is not known. The polypeptide is Late embryogenesis abundant protein D-19 (Gossypium hirsutum (Upland cotton)).